A 621-amino-acid polypeptide reads, in one-letter code: pH-response transcription factor pacc-1 (621 aa).

Residues 1-14 are compositionally biased toward polar residues; sequence MSSTPAQENGTVNG. Residues 1 to 87 are disordered; the sequence is MSSTPAQENG…PTTASNSSAP (87 aa). Low complexity predominate over residues 15-87; sequence ANAAPAPAPA…PTTASNSSAP (73 aa). 3 consecutive C2H2-type zinc fingers follow at residues 95–120, 131–155, and 161–183; these read LVCR…CEKH, LTCQ…VRVH, and HKCD…VKTH. 2 disordered regions span residues 395–539 and 566–621; these read PTYA…PETY and DEDD…PRIN. 2 stretches are compositionally biased toward low complexity: residues 409–423 and 436–465; these read ASLA…PHSA and SYTS…VSYP. The YPX[LI] motif 1 motif lies at 464–467; sequence YPTL. Positions 476–486 are enriched in polar residues; the sequence is PSTSGLGSNFT. Residues 502–511 are compositionally biased toward basic and acidic residues; that stretch reads RAADEADRAP. Positions 515-525 are enriched in polar residues; sequence ASEQATVSSPS. The segment covering 583 to 595 has biased composition (low complexity); that stretch reads RNQQQRNQQQQQQ. The short motif at 614 to 617 is the YPX[LI] motif 2 element; sequence YPVL.

This sequence belongs to the pacC/RIM101 family. In terms of assembly, binds to DNA. Interacts with palA/prr-1, which binds to the two YPX[LI] motifs and is required for proteolytic processing. Activated by C-terminal proteolytic cleavage by signaling protease (probably palB/RIM13) at neutral to alkaline ambient pH.

Its subcellular location is the cytoplasm. The protein localises to the nucleus. In terms of biological role, transcription factor that mediates regulation of both acid- and alkaline-expressed genes in response to ambient pH. At alkaline ambient pH, activates transcription of alkaline-expressed genes (including pacc-1 itself) and represses transcription of acid-expressed genes. In Neurospora crassa (strain ATCC 24698 / 74-OR23-1A / CBS 708.71 / DSM 1257 / FGSC 987), this protein is pH-response transcription factor pacc-1 (pacc-1).